The chain runs to 367 residues: F-box only protein 25 (367 aa).

An interaction with beta-actin region spans residues 1–83 (MPFLGQDWRS…NDTNTQSFYR (83 aa)). The F-box domain occupies 226-274 (LTLSDLPLHMLNNILYRFSDGWDIITLGQVTPTLYMLSEDRQLWKKLCQ).

In terms of assembly, part of a SCF (SKP1-cullin-F-box) protein ligase complex consisting of FBXO25, SKP1, CUL1 and RBX1. Interacts directly with SKP1 and CUL1. Interacts (via C-terminus) with beta-actin (via N-terminus). As to expression, expressed in all brain tissue observed.

Its subcellular location is the nucleus. It participates in protein modification; protein ubiquitination. In terms of biological role, substrate-recognition component of the SCF (SKP1-CUL1-F-box protein)-type E3 ubiquitin ligase complex. May play a role in accumulation of expanded polyglutamine (polyQ) protein huntingtin (HTT). This chain is F-box only protein 25 (FBXO25), found in Homo sapiens (Human).